A 530-amino-acid polypeptide reads, in one-letter code: Phosphoenolpyruvate carboxykinase (ATP) (530 aa).

3 residues coordinate substrate: Arg60, Tyr195, and Lys201. ATP contacts are provided by residues Lys201, His221, and 237–245 (GLSGTGKTT). Residues Lys201 and His221 each contribute to the Mn(2+) site. Residue Asp258 participates in Mn(2+) binding. Positions 286, 324, and 449 each coordinate ATP. Position 324 (Arg324) interacts with substrate.

Belongs to the phosphoenolpyruvate carboxykinase (ATP) family. Mn(2+) serves as cofactor.

The protein localises to the cytoplasm. It catalyses the reaction oxaloacetate + ATP = phosphoenolpyruvate + ADP + CO2. Its pathway is carbohydrate biosynthesis; gluconeogenesis. Involved in the gluconeogenesis. Catalyzes the conversion of oxaloacetate (OAA) to phosphoenolpyruvate (PEP) through direct phosphoryl transfer between the nucleoside triphosphate and OAA. The sequence is that of Phosphoenolpyruvate carboxykinase (ATP) from Geotalea uraniireducens (strain Rf4) (Geobacter uraniireducens).